The sequence spans 489 residues: Aklavinone 12-hydroxylase DnrF (489 aa).

Residues 17–18 (LG), Glu-37, Gln-121, and Leu-145 each bind FAD. Residue Tyr-224 is the Proton acceptor of the active site. Asp-308 serves as a coordination point for FAD. Gly-317 serves as a coordination point for aklavinone. Disordered stretches follow at residues 402–428 (VAAEDDDPEPTEDPRRPSGRPGFRAPH) and 455–489 (EGGAWPGRPPAPPRIWASASTSISSAAMSPPPPAN). Residues 468–482 (RIWASASTSISSAAM) show a composition bias toward low complexity.

Belongs to the PheA/TfdB FAD monooxygenase family. In terms of assembly, monomer. FAD serves as cofactor.

It carries out the reaction aklavinone + NADPH + O2 + H(+) = epsilon-rhodomycinone + NADP(+) + H2O. The protein operates within antibiotic biosynthesis; daunorubicin biosynthesis. Its pathway is antibiotic biosynthesis; carminomycin biosynthesis. It participates in antibiotic biosynthesis; rhodomycin biosynthesis. In terms of biological role, involved in the biosynthesis of the anthracyclines carminomycin, rhodomycin and daunorubicin (daunomycin) which are aromatic polyketide antibiotics that exhibit high cytotoxicity and are widely applied in the chemotherapy of a variety of cancers. Catalyzes the incorporation of a hydroxyl group at position C-11 of aklavinone, resulting in epsilon-rhodomycinone. It cannot accept substrates glycosylated at position C-7. It can also hydroxylate 11-deoxycarminomycinone and can use both NAD or NADP. This chain is Aklavinone 12-hydroxylase DnrF (dnrF), found in Streptomyces peucetius.